A 724-amino-acid chain; its full sequence is NAD(+) hydrolase SARM1 (724 aa).

The N-terminal 27 residues, 1–27 (MVLTLLFSAYKLCRFFIMSGPRPGADR), are a transit peptide targeting the mitochondrion. Residues 60 to 100 (EVQGALERSLPELQQALSELKQASAAQAVGAGLAEVFQLVE) form an ARM 1 repeat. NAD(+) is bound by residues Trp-103, Arg-110, 149 to 157 (EQILVAENR), and 190 to 193 (HMFK). ARM repeat units lie at residues 114–153 (QGLC…QILV), 155–193 (ENRD…HMFK), 196–235 (EETC…NCAL), 237–280 (GGQT…LATN), 281–314 (KEVE…CLVD), 315–354 (ASDT…AEAA), and 359–402 (QGKT…EEVP). 2 consecutive SAM domains span residues 412–476 (WKEA…LKTF) and 486–548 (NLAD…MLHS). 2 positions are modified to phosphoserine: Ser-548 and Ser-558. The TIR domain occupies 560–703 (DTPDVFISYR…KIIRFLQGRP (144 aa)). Residues 569–570 (RR) and Glu-599 each bind NAD(+). Glu-642 is an active-site residue. Residues 703–717 (PSQDSSAGSDTSLEG) are compositionally biased toward polar residues. Positions 703–724 (PSQDSSAGSDTSLEGATSMGLP) are disordered.

This sequence belongs to the SARM1 family. Homooctamer; forms an octameric ring via SAM domains. Interacts with TICAM1/TRIF and thereby interferes with TICAM1/TRIF function. Interacts with MAPK10/JNK3 and SDC2 (via cytoplasmic domain). Phosphorylation at Ser-548 by JNK kinases (MAPK8, MAPK9 and /or MAPK10) enhance the NAD(+) hydrolase (NADase) activity. Phosphorylation at Ser-548 and subsequent activation takes place in response to oxidative stress conditions and inhibits mitochondrial respiration. Phosphorylation at Ser-548 increases in response to cerebral ischemia/reperfusion (I/R) injury.

It localises to the cytoplasm. The protein localises to the cell projection. It is found in the axon. The protein resides in the dendrite. Its subcellular location is the synapse. It localises to the mitochondrion. The catalysed reaction is NAD(+) + H2O = ADP-D-ribose + nicotinamide + H(+). The enzyme catalyses NAD(+) = cyclic ADP-beta-D-ribose + nicotinamide + H(+). It carries out the reaction NADP(+) + H2O = ADP-D-ribose 2'-phosphate + nicotinamide + H(+). Autoinhibited: in the inactive state, the enzymatic TIR domain is held apart by the autoinhibiting ARM repeats. NAD(+)-binding to ARM repeats maintains an inactive state by promoting interaction between ARM repeats and the TIR domain, thereby facilitating inhibition of the enzymatic TIR domain. Following activation, possibly by nicotinamide mononucleotide (NMN), auto-inhibitory interactions are released, allowing self-association of the TIR domains and subsequent activation of the NAD(+) hydrolase (NADase) activity. Self-association of TIR domains is facilitated by the octamer of SAM domains. Functionally, NAD(+) hydrolase, which plays a key role in axonal degeneration following injury by regulating NAD(+) metabolism. Acts as a negative regulator of MYD88- and TRIF-dependent toll-like receptor signaling pathway by promoting Wallerian degeneration, an injury-induced form of programmed subcellular death which involves degeneration of an axon distal to the injury site. Wallerian degeneration is triggered by NAD(+) depletion: in response to injury, SARM1 is activated and catalyzes cleavage of NAD(+) into ADP-D-ribose (ADPR), cyclic ADPR (cADPR) and nicotinamide; NAD(+) cleavage promoting cytoskeletal degradation and axon destruction. Also able to hydrolyze NADP(+), but not other NAD(+)-related molecules. Can activate neuronal cell death in response to stress. Regulates dendritic arborization through the MAPK4-JNK pathway. Involved in innate immune response: inhibits both TICAM1/TRIF- and MYD88-dependent activation of JUN/AP-1, TRIF-dependent activation of NF-kappa-B and IRF3, and the phosphorylation of MAPK14/p38. In Rattus norvegicus (Rat), this protein is NAD(+) hydrolase SARM1.